The chain runs to 25 residues: Caerin-1.18 (25 aa).

A Leucine amide modification is found at Leu25.

Expressed by the skin dorsal glands.

Its subcellular location is the secreted. In terms of biological role, shows significant activity against Gram-positive organisms, but is less effective against Gram-negative organisms. This chain is Caerin-1.18, found in Ranoidea gracilenta (Dainty green tree frog).